We begin with the raw amino-acid sequence, 365 residues long: Tetratricopeptide repeat protein 19, mitochondrial (365 aa).

Residues M1–G52 constitute a mitochondrion transit peptide. 4 TPR repeats span residues T127–G160, A220–I260, I269–I302, and H308–K341.

This sequence belongs to the TTC19 family. Binds to the mature mitochondrial complex III dimer, after the incorporation of the Rieske protein UQCRFS1. Interacts with UQCRC1 and UQCRFS1. Interacts with ZFYVE26 and CHMP4B. Proteolytically cleaved by PARL.

It is found in the mitochondrion inner membrane. Functionally, required for the preservation of the structural and functional integrity of mitochondrial respiratory complex III by allowing the physiological turnover of the Rieske protein UQCRFS1. Involved in the clearance of UQCRFS1 N-terminal fragments, which are produced upon incorporation into the complex III and whose presence is detrimental for its catalytic activity. This is Tetratricopeptide repeat protein 19, mitochondrial (Ttc19) from Mus musculus (Mouse).